The chain runs to 469 residues: MTSIDINNLQNTFQQAMNMSGSPGAVCTSPTQSFMNTVPQRLNAVKHPKILKPFSTGDMKILLLENVNQTAITIFEEQGYQVEFYKSSLPEEELIEKIKDVHAIGIRSKTRLTSNVLQHAKNLVCIGCFCIGTNQVDLDYATSRGIAVFNSPFSNSRSVAELVIAEIISLARQLGDRSIELHTGTWNKVAARCWEVRGKTLGIIGYGHIGSQLSVLAEAMGLHVLYYDIVTIMALGTARQVSTLDELLNKSDFVTLHVPATPETEKMLSAPQFAAMKDGAYVINASRGTVVDIPSLIQAVKANKIAGAALDVYPHEPAKNGEGSFNDELNSWTSELVSLPNIILTPHIGGSTEEAQSSIGIEVATALSKYINEGNSVGSVNFPEVALKSLSYDQENTVRVLYIHQNVPGVLKTVNDILSNHNIEKQFSDSNGEIAYLMADISSVDQSDIKDIYEQLNQTSAKISIRLLY.

3 positions are modified to phosphoserine: Ser-22, Ser-29, and Ser-33. NAD(+)-binding positions include 208 to 209 (HI), Asp-228, 285 to 287 (ASR), and Asp-311. Residue Arg-287 is part of the active site. The active site involves Glu-316. His-347 functions as the Proton donor in the catalytic mechanism. 347–350 (HIGG) is an NAD(+) binding site. One can recognise an ACT domain in the interval 399–469 (RVLYIHQNVP…SAKISIRLLY (71 aa)).

It belongs to the D-isomer specific 2-hydroxyacid dehydrogenase family.

The catalysed reaction is (2R)-3-phosphoglycerate + NAD(+) = 3-phosphooxypyruvate + NADH + H(+). The enzyme catalyses (R)-2-hydroxyglutarate + NAD(+) = 2-oxoglutarate + NADH + H(+). It participates in amino-acid biosynthesis; L-serine biosynthesis; L-serine from 3-phospho-D-glycerate: step 1/3. In terms of biological role, catalyzes the reversible oxidation of 3-phospho-D-glycerate to 3-phosphonooxypyruvate, the first step of the phosphorylated L-serine biosynthesis pathway. Also catalyzes the reversible oxidation of 2-hydroxyglutarate to 2-oxoglutarate. This Saccharomyces cerevisiae (strain ATCC 204508 / S288c) (Baker's yeast) protein is D-3-phosphoglycerate dehydrogenase 1 (SER3).